Here is a 332-residue protein sequence, read N- to C-terminus: MQLIKALKGHTDRAWAASVHPNLPLLATCSGDKTVRIYNTNNWELVTTITEGHNRSVRSVAWKPSGSSPSLALGSFDSTVSIWGKEDDEWQFLAAIEGHENEVKGVSWSCDGQLLATCSRDKSIWVWEADDMNDEFECISVLQDHTQDVKHVAWHPSEMVFASASYDDTVRLWREDDDDWICVADLGGHESTVWGCAFEPSEGSDLRLVSCSDDKTCIVWKKEGQVGGTGDHSGIRPAFRADPLSEEWIQQATLPEAHTRAIYSVAWNKNGRIASTGADGKLVVYKENGPGQWVVESEVENAHGVYEVNDVVWLDDKLVTSGDDGVVNIWEV.

7 WD repeats span residues 9–48 (GHTD…LVTT), 52–93 (GHNR…WQFL), 98–137 (GHEN…DEFE), 144–183 (DHTQ…WICV), 188–230 (GHES…GGTG), 257–295 (AHTR…QWVV), and 302–332 (AHGV…IWEV).

The protein belongs to the WD repeat CIA1 family. As to quaternary structure, interacts with NAR1.

It is found in the cytoplasm. Its subcellular location is the nucleus. In terms of biological role, essential component of the cytosolic iron-sulfur (Fe/S) protein assembly machinery. Required for the maturation of extramitochondrial Fe/S proteins. The chain is Probable cytosolic iron-sulfur protein assembly protein 1 from Yarrowia lipolytica (strain CLIB 122 / E 150) (Yeast).